Reading from the N-terminus, the 458-residue chain is UPF0210 protein Mevan_0738 (458 aa).

It belongs to the UPF0210 family.

This Methanococcus vannielii (strain ATCC 35089 / DSM 1224 / JCM 13029 / OCM 148 / SB) protein is UPF0210 protein Mevan_0738.